A 200-amino-acid polypeptide reads, in one-letter code: Recombination protein RecR (200 aa).

The C4-type zinc finger occupies 57–72 (CEHCRTFTEEDICSIC). Positions 81 to 176 (RLLCVVEMPA…KVSRIAHGIP (96 aa)) constitute a Toprim domain.

It belongs to the RecR family.

Its function is as follows. May play a role in DNA repair. It seems to be involved in an RecBC-independent recombinational process of DNA repair. It may act with RecF and RecO. The sequence is that of Recombination protein RecR from Mannheimia succiniciproducens (strain KCTC 0769BP / MBEL55E).